The chain runs to 283 residues: Bifunctional protein FolD (283 aa).

Residues Gly-166 to Ser-168, Ser-191, and Ile-232 each bind NADP(+).

This sequence belongs to the tetrahydrofolate dehydrogenase/cyclohydrolase family. In terms of assembly, homodimer.

It catalyses the reaction (6R)-5,10-methylene-5,6,7,8-tetrahydrofolate + NADP(+) = (6R)-5,10-methenyltetrahydrofolate + NADPH. The catalysed reaction is (6R)-5,10-methenyltetrahydrofolate + H2O = (6R)-10-formyltetrahydrofolate + H(+). The protein operates within one-carbon metabolism; tetrahydrofolate interconversion. Its function is as follows. Catalyzes the oxidation of 5,10-methylenetetrahydrofolate to 5,10-methenyltetrahydrofolate and then the hydrolysis of 5,10-methenyltetrahydrofolate to 10-formyltetrahydrofolate. This chain is Bifunctional protein FolD, found in Laribacter hongkongensis (strain HLHK9).